Reading from the N-terminus, the 483-residue chain is O-acetyltransferase pboB (483 aa).

This sequence belongs to the fumigaclavine B O-acetyltransferase family. Monomer.

Its pathway is secondary metabolite biosynthesis. Functionally, O-acetyltransferase; part of the gene cluster that mediates the biosynthesis of protubonine B, a hydroxylated and diacetylated cyclo-L-Trp-L-Leu derivative. Within the pathway, pboB catalyzes the acetylation of protubonine C at N-1 of the indoline ring to produce protubonine B. The first step of the protubonine B synthesis is performed by the nonribosomal peptide synthetase pboA that catalyzes the formation of cyclo-L-Trp-L-Leu by condensing L-Leu with L-Trp. The flavin-dependent monooxygenase pboD is responsible for hydroxylation at C-3 of the indole ring and subsequent formation of the pyrrolidine ring, leadind to protubonine D. Protubonine D is further diacetylated by two acetyltransferases, pboB and pboC, to form the final product protubonine B via protubonine C. This is O-acetyltransferase pboB from Aspergillus ustus.